A 206-amino-acid polypeptide reads, in one-letter code: Protein Nef (206 aa).

The N-myristoyl glycine; by host moiety is linked to residue Gly-2. Phosphoserine; by host is present on Ser-6. The interval 62 to 66 is acidic; interacts with host PACS1 and PACS2; stabilizes the interaction of NEF/MHC-I with host AP1M1; necessary for MHC-I internalization; sequence EDGEE. The SH3-binding; interaction with Src family tyrosine kinases stretch occupies residues 70–79; that stretch reads PVRPQVPLRP. Positions 73 to 76 match the PxxP; stabilizes the interaction of NEF/MHC-I with host AP1M1; necessary for MHC-I internalization motif; the sequence is PQVP. Residues 109–125 form a mediates dimerization, Nef-PTE1 interaction region; it reads DILDLWVYNTQGYFPDW. The binding to ATP6V1H stretch occupies residues 149-181; it reads VNPQEVEQANEGENNSLLHPMSLHGMEDDGREV. Residues 165 to 166 carry the Dileucine internalization motif; necessary for CD4 internalization motif; that stretch reads LL. Residues 175-176 carry the Diacidic; necessary for CD4 internalization motif; that stretch reads ED.

This sequence belongs to the lentivirus primate group Nef protein family. Monomer; cytosolic form. Homodimer; membrane bound form. Interacts with Nef associated p21-activated kinase (PAK2); this interaction activates PAK2. Associates with the Nef-MHC-I-AP1 complex; this complex is required for MHC-I internalization. Interacts (via C-terminus) with host PI3-kinase. Interacts with host PACS1; this interaction seems to be weak. Interacts with host PACS2. Interacts with host LCK and MAPK3; these interactions inhibit the kinase activity of the latter. Interacts with host ATP6V1H; this interaction may play a role in CD4 endocytosis. Associates with the CD4-Nef-AP2 complex; this complex is required for CD4 internalization. Interacts with host AP2 subunit alpha and AP2 subunit sigma2. Interacts with TCR-zeta chain; this interaction up-regulates the Fas ligand (FasL) surface expression. Interacts with host HCK, LYN, and SRC; these interactions activate the Src family kinases. Interacts with MAP3K5; this interaction inhibits the Fas and TNFR-mediated death signals. Interacts with beta-COP and PTE1. Interacts with human RACK1; this increases Nef phosphorylation by PKC. Interacts with TP53; this interaction decreases the half-life of TP53, protecting the infected cell against p53-mediated apoptosis. Post-translationally, the virion-associated Nef proteins are cleaved by the viral protease to release the soluble C-terminal core protein. Nef is probably cleaved concomitantly with viral structural proteins on maturation of virus particles. Myristoylated. In terms of processing, phosphorylated on serine residues, probably by host PKCdelta and theta.

It localises to the host cell membrane. Its subcellular location is the virion. The protein resides in the secreted. It is found in the host Golgi apparatus membrane. Factor of infectivity and pathogenicity, required for optimal virus replication. Alters numerous pathways of T-lymphocyte function and down-regulates immunity surface molecules in order to evade host defense and increase viral infectivity. Alters the functionality of other immunity cells, like dendritic cells, monocytes/macrophages and NK cells. Its function is as follows. In infected CD4(+) T-lymphocytes, down-regulates the surface MHC-I, mature MHC-II, CD4, CD28, CCR5 and CXCR4 molecules. Mediates internalization and degradation of host CD4 through the interaction of with the cytoplasmic tail of CD4, the recruitment of AP-2 (clathrin adapter protein complex 2), internalization through clathrin coated pits, and subsequent transport to endosomes and lysosomes for degradation. Diverts host MHC-I molecules to the trans-Golgi network-associated endosomal compartments by an endocytic pathway to finally target them for degradation. MHC-I down-regulation may involve AP-1 (clathrin adapter protein complex 1) or possibly Src family kinase-ZAP70/Syk-PI3K cascade recruited by PACS2. In consequence infected cells are masked for immune recognition by cytotoxic T-lymphocytes. Decreasing the number of immune receptors also prevents reinfection by more HIV particles (superinfection). Down-regulates host SERINC3 and SERINC5 thereby excluding these proteins from the viral particles. Virion infectivity is drastically higher when SERINC3 or SERINC5 are excluded from the viral envelope, because these host antiviral proteins impair the membrane fusion event necessary for subsequent virion penetration. Functionally, bypasses host T-cell signaling by inducing a transcriptional program nearly identical to that of anti-CD3 cell activation. Interaction with TCR-zeta chain up-regulates the Fas ligand (FasL). Increasing surface FasL molecules and decreasing surface MHC-I molecules on infected CD4(+) cells send attacking cytotoxic CD8+ T-lymphocytes into apoptosis. In terms of biological role, plays a role in optimizing the host cell environment for viral replication without causing cell death by apoptosis. Protects the infected cells from apoptosis in order to keep them alive until the next virus generation is ready to strike. Inhibits the Fas and TNFR-mediated death signals by blocking MAP3K5/ASK1. Decreases the half-life of TP53, protecting the infected cell against p53-mediated apoptosis. Inhibits the apoptotic signals regulated by the Bcl-2 family proteins through the formation of a Nef/PI3-kinase/PAK2 complex that leads to activation of PAK2 and induces phosphorylation of host BAD. Extracellular Nef protein targets CD4(+) T-lymphocytes for apoptosis by interacting with CXCR4 surface receptors. This Homo sapiens (Human) protein is Protein Nef.